We begin with the raw amino-acid sequence, 364 residues long: 3-isopropylmalate dehydrogenase (364 aa).

An NAD(+)-binding site is contributed by 79 to 92 (GPKWNNINETSRPE). Arginine 100, arginine 110, arginine 139, and aspartate 228 together coordinate substrate. Mg(2+) contacts are provided by aspartate 228, aspartate 252, and aspartate 256. 286–298 (GSAPDIAGKNIAN) serves as a coordination point for NAD(+).

This sequence belongs to the isocitrate and isopropylmalate dehydrogenases family. LeuB type 1 subfamily. In terms of assembly, homodimer. Mg(2+) serves as cofactor. Requires Mn(2+) as cofactor.

The protein localises to the cytoplasm. It catalyses the reaction (2R,3S)-3-isopropylmalate + NAD(+) = 4-methyl-2-oxopentanoate + CO2 + NADH. It participates in amino-acid biosynthesis; L-leucine biosynthesis; L-leucine from 3-methyl-2-oxobutanoate: step 3/4. Functionally, catalyzes the oxidation of 3-carboxy-2-hydroxy-4-methylpentanoate (3-isopropylmalate) to 3-carboxy-4-methyl-2-oxopentanoate. The product decarboxylates to 4-methyl-2 oxopentanoate. In Blochmanniella floridana, this protein is 3-isopropylmalate dehydrogenase.